We begin with the raw amino-acid sequence, 193 residues long: dTTP/UTP pyrophosphatase (193 aa).

Residue Asp77 is the Proton acceptor of the active site.

The protein belongs to the Maf family. YhdE subfamily. A divalent metal cation is required as a cofactor.

It localises to the cytoplasm. The enzyme catalyses dTTP + H2O = dTMP + diphosphate + H(+). It catalyses the reaction UTP + H2O = UMP + diphosphate + H(+). Functionally, nucleoside triphosphate pyrophosphatase that hydrolyzes dTTP and UTP. May have a dual role in cell division arrest and in preventing the incorporation of modified nucleotides into cellular nucleic acids. This chain is dTTP/UTP pyrophosphatase, found in Bacteroides thetaiotaomicron (strain ATCC 29148 / DSM 2079 / JCM 5827 / CCUG 10774 / NCTC 10582 / VPI-5482 / E50).